Here is a 65-residue protein sequence, read N- to C-terminus: Large ribosomal subunit protein bL35 (65 aa).

Belongs to the bacterial ribosomal protein bL35 family.

This chain is Large ribosomal subunit protein bL35, found in Geobacter sp. (strain M21).